The chain runs to 79 residues: Small ribosomal subunit protein bS18c (79 aa).

Belongs to the bacterial ribosomal protein bS18 family. Part of the 30S ribosomal subunit.

It localises to the plastid. It is found in the chloroplast. The sequence is that of Small ribosomal subunit protein bS18c from Physcomitrium patens (Spreading-leaved earth moss).